A 420-amino-acid chain; its full sequence is D-tagatose-1,6-bisphosphate aldolase subunit GatZ (420 aa).

This sequence belongs to the GatZ/KbaZ family. GatZ subfamily. As to quaternary structure, forms a complex with GatY.

It participates in carbohydrate metabolism; D-tagatose 6-phosphate degradation; D-glyceraldehyde 3-phosphate and glycerone phosphate from D-tagatose 6-phosphate: step 2/2. Component of the tagatose-1,6-bisphosphate aldolase GatYZ that is required for full activity and stability of the Y subunit. Could have a chaperone-like function for the proper and stable folding of GatY. When expressed alone, GatZ does not show any aldolase activity. Is involved in the catabolism of galactitol. This Escherichia coli O8 (strain IAI1) protein is D-tagatose-1,6-bisphosphate aldolase subunit GatZ.